The primary structure comprises 342 residues: Succinoglycan biosynthesis protein ExoU (342 aa).

The protein belongs to the glycosyltransferase 2 family.

Its subcellular location is the cytoplasm. Its pathway is glycan metabolism; exopolysaccharide biosynthesis. In terms of biological role, glycosyltransferase required for the synthesis of succinoglycan (EPS I). Needed for the addition of the sixth sugar (glucose), catalyzes the formation of a beta-1,6 linkage between the fifth and sixth sugar. This is Succinoglycan biosynthesis protein ExoU (exoU) from Rhizobium meliloti (strain 1021) (Ensifer meliloti).